The chain runs to 410 residues: Chorismate synthase (410 aa).

Positions 40 and 46 each coordinate NADP(+). Residues 129–131 (RSS), 257–258 (QA), G302, 317–321 (KPISS), and R343 contribute to the FMN site.

The protein belongs to the chorismate synthase family. As to quaternary structure, homotetramer. Requires FMNH2 as cofactor.

The catalysed reaction is 5-O-(1-carboxyvinyl)-3-phosphoshikimate = chorismate + phosphate. It functions in the pathway metabolic intermediate biosynthesis; chorismate biosynthesis; chorismate from D-erythrose 4-phosphate and phosphoenolpyruvate: step 7/7. Functionally, catalyzes the anti-1,4-elimination of the C-3 phosphate and the C-6 proR hydrogen from 5-enolpyruvylshikimate-3-phosphate (EPSP) to yield chorismate, which is the branch point compound that serves as the starting substrate for the three terminal pathways of aromatic amino acid biosynthesis. This reaction introduces a second double bond into the aromatic ring system. This Chlorobaculum parvum (strain DSM 263 / NCIMB 8327) (Chlorobium vibrioforme subsp. thiosulfatophilum) protein is Chorismate synthase.